Consider the following 772-residue polypeptide: Serine/threonine-protein kinase tousled-like 2 (772 aa).

The disordered stretch occupies residues 24–126; the sequence is GVSKGPLNSE…SNPLPRRVEQ (103 aa). The segment covering 29-44 has biased composition (polar residues); it reads PLNSESSNQSLCSVGS. Residues 46–61 are compositionally biased toward basic and acidic residues; that stretch reads SDKEVETPEKKQNDQR. Phosphoserine occurs at positions 73, 94, 99, 115, 117, and 134. Positions 180–208 are disordered; the sequence is QNSPSSTGSGNTEHSCSSQKQISIQHRQT. The required for interaction with TLK1 and DYNLL1/LC8 stretch occupies residues 225-276; the sequence is NSDLEKKEGRIDDLLRANCDLRRQIDEQQKMLEKYKERLNRCVTMSKKLLIE. Coiled-coil stretches lie at residues 225–276 and 317–347; these read NSDL…LLIE and AFQN…KRKP. Residues 342-385 are disordered; sequence LAKRKPPAMGQAPPATNEQKQRKSKTNGAENETPSSGNTELKDT. The segment covering 367 to 380 has biased composition (polar residues); it reads TNGAENETPSSGNT. Residues 403-451 adopt a coiled-coil conformation; the sequence is HEQEEIFKLRLGHLKKEEAEIQAELERLERVRNLHIRELKRIHNEDNSQ. The 280-residue stretch at 462–741 folds into the Protein kinase domain; the sequence is YLLLHLLGRG…VQQLACDPYL (280 aa). Residues 468-476 and Lys491 each bind ATP; that span reads LGRGGFSEV. Residue Asp592 is the Proton acceptor of the active site. Ser750 is subject to Phosphoserine; by CHEK1.

The protein belongs to the protein kinase superfamily. Ser/Thr protein kinase family. Monomer. May form homodimers; homodimerization may enhance autophosphoylation and enzymatic activity. Heterodimer with TLK1. Interacts with YWHAZ; association with 14-3-3 proteins such as YWHAZ regulates subcellular location. May also interact with FEZ1/LZTS1 and FEZ2. Interacts with CHD7 and CHD8. Interacts with DYNLL1/LC8. Mg(2+) is required as a cofactor. Post-translationally, phosphorylated at Ser-750, probably by CHEK1. In terms of processing, autophosphorylated; phosphorylation promotes the assembly of higher order oligomers and enzymatic activity. Detected in placenta, fetal liver, kidney, pancreas, heart and skeletal muscle. Highly expressed in testis. Detected in spleen, thymus, colon, ovary, small intestine, prostate and peripheral blood leukocytes. Almost undetectable in liver and lung.

The protein resides in the nucleus. It is found in the nucleoplasm. It localises to the cytoplasm. The protein localises to the perinuclear region. Its subcellular location is the cytoskeleton. It catalyses the reaction L-seryl-[protein] + ATP = O-phospho-L-seryl-[protein] + ADP + H(+). The catalysed reaction is L-threonyl-[protein] + ATP = O-phospho-L-threonyl-[protein] + ADP + H(+). Cell cycle-regulated, with maximal activity in the S-phase. Rapidly and transiently inhibited by phosphorylation following the generation of DNA double-stranded breaks during S-phase, probably by CHEK1, possibly at Ser-750. This inhibition is cell cycle checkpoint- and ATM-dependent. Serine/threonine-protein kinase involved in the process of chromatin assembly and probably also DNA replication, transcription, repair, and chromosome segregation. Phosphorylates the chromatin assembly factors ASF1A and ASF1B. Phosphorylation of ASF1A prevents its proteasome-mediated degradation, thereby enhancing chromatin assembly. Negative regulator of amino acid starvation-induced autophagy. This is Serine/threonine-protein kinase tousled-like 2 from Homo sapiens (Human).